Consider the following 481-residue polypeptide: Protein hedgehog (481 aa).

Positions 1–19 (MDNQAVSALWSCASATCLS) are cleaved as a signal peptide. Positions 20–90 (LDAKRHSIEP…LALNFRHAHS (71 aa)) are excised as a propeptide. The tract at residues 26-56 (SIEPNPDGQASPDVNNNNNNHNKSTTTVDAH) is disordered. Residue cysteine 91 is the site of N-palmitoyl cysteine attachment. Ca(2+)-binding residues include glutamate 155, glutamate 156, aspartate 161, threonine 191, glutamate 192, aspartate 195, and aspartate 197. Glycine 264 is lipidated: Cholesterol glycine ester.

This sequence belongs to the hedgehog family. Interacts with shf. In terms of processing, the C-terminal part of the hedgehog protein precursor displays an autoproteolysis activity that results in the cleavage of the full-length protein into two parts (N-product and C-product). In addition, the C-terminal part displays a cholesterol transferase activity that results by the covalent attachment of a cholesterol moiety to the C-terminal of the newly generated N-product. The N-product is the active species in both local and long-range signaling, whereas the C-product has no signaling activity. Post-translationally, cholesterylation is required for N-product targeting to lipid rafts and multimerization. N-palmitoylation by Rasp of the hedgehog N-product, within the secretory pathway, is required for the embryonic and larval patterning activities of the hedgehog signal.

It is found in the nucleus. The protein localises to the cytoplasm. It localises to the cell membrane. The catalysed reaction is glycyl-L-cysteinyl-[protein] + cholesterol + H(+) = [protein]-C-terminal glycyl cholesterol ester + N-terminal L-cysteinyl-[protein]. Functionally, the C-terminal part of the hedgehog protein precursor displays an autoproteolysis activity that results in the cleavage of the full-length protein into two parts (N-product and C-product). In addition, the C-terminal part displays a cholesterol transferase activity that results by the covalent attachment of a cholesterol moiety to the C-terminal of the newly generated N-product. Once cleaved, the C-product has no signaling activity and diffuses from the cell. Its function is as follows. The dually lipidated hedgehog protein N-product is a morphogen which is essential for a variety of patterning events during development. Establishes the anterior-posterior axis of the embryonic segments and patterns the larval imaginal disks. Binds to the patched (ptc) receptor, which functions in association with smoothened (smo), to activate the transcription of target genes wingless (wg), decapentaplegic (dpp) and ptc. In the absence of hh, ptc represses the constitutive signaling activity of smo through fused (fu). Essential component of a signaling pathway which regulates the Duox-dependent gut immune response to bacterial uracil; required to activate Cad99C-dependent endosome formation, norpA-dependent Ca2+ mobilization and p38 MAPK, which are essential steps in the Duox-dependent production of reactive oxygen species (ROS) in response to intestinal bacterial infection. During photoreceptor differentiation, it up-regulates transcription of Ubr3, which in turn promotes the hh-signaling pathway by mediating the ubiquitination and degradation of cos. This Drosophila hydei (Fruit fly) protein is Protein hedgehog.